The primary structure comprises 185 residues: Ribosome-recycling factor (185 aa).

Belongs to the RRF family.

It localises to the cytoplasm. Responsible for the release of ribosomes from messenger RNA at the termination of protein biosynthesis. May increase the efficiency of translation by recycling ribosomes from one round of translation to another. The polypeptide is Ribosome-recycling factor (Vibrio campbellii (strain ATCC BAA-1116)).